The following is an 860-amino-acid chain: Leucine--tRNA ligase (860 aa).

Positions 42–52 match the 'HIGH' region motif; it reads PYPSGRLHMGH. A 'KMSKS' region motif is present at residues 619–623; it reads KMSKS. Lys622 provides a ligand contact to ATP.

The protein belongs to the class-I aminoacyl-tRNA synthetase family.

Its subcellular location is the cytoplasm. It catalyses the reaction tRNA(Leu) + L-leucine + ATP = L-leucyl-tRNA(Leu) + AMP + diphosphate. The chain is Leucine--tRNA ligase from Escherichia coli O157:H7.